Here is a 777-residue protein sequence, read N- to C-terminus: Proton-coupled zinc antiporter SLC30A5 (777 aa).

Topologically, residues 1 to 28 (MEEKYSSNVMSSGRLGPVDAPESRLTRY) are cytoplasmic. Residues 29 to 49 (IVLLCFTKFLKALGIFESYDL) form a helical membrane-spanning segment. Residues 50-52 (LKV) lie on the Lumenal side of the membrane. Residues 53 to 73 (VHIVQFIFILKLGSTCFMVLF) form a helical membrane-spanning segment. The Cytoplasmic portion of the chain corresponds to 74-94 (QKPFSSGKSITKRQWVSIVKH). A helical transmembrane segment spans residues 95–115 (AFVSCIISLLWFFGLTLCGPL). Residues 116–117 (RT) lie on the Lumenal side of the membrane. Residues 118–138 (LLLFEHSDIVVISLLTVLFTG) traverse the membrane as a helical segment. Residues 139–148 (SGGGPSKTRG) are Cytoplasmic-facing. A helical transmembrane segment spans residues 149–169 (AAFFIIAVICLLLFDNDDLMA). Residues 170-189 (KIAEHPEGHHDSALTHFLYR) are Lumenal-facing. The chain crosses the membrane as a helical span at residues 190 to 210 (AFFLLGVADHKGGVLLLVLAL). Topologically, residues 211–234 (CFNVGFHTASRKLSLDIGGAKRLQ) are cytoplasmic. The chain crosses the membrane as a helical span at residues 235 to 255 (ALSHLVSVIILSPWVIILSAT). Residues 256 to 263 (TESKIESW) are Lumenal-facing. The chain crosses the membrane as a helical span at residues 264–284 (SALIMPFMTVIFSVMIMDFYV). Topologically, residues 285–299 (ESVCSVKMEPSKCAR) are cytoplasmic. The helical transmembrane segment at 300 to 320 (YGSFLIFASALLLGNFWTHPI) threads the bilayer. At 321-338 (TDQLRAMNKPAHQLHTEH) the chain is on the lumenal side. Residues 339 to 359 (VLSGGVVVSAIFFILSAQILA) traverse the membrane as a helical segment. The Cytoplasmic segment spans residues 360 to 414 (SSSRKGQRGTLVGYSPEGTPLYNFMGDALHNTSPSMPRFLKDSLKQILEEYDSRQ). The helical transmembrane segment at 415 to 435 (IFYFLCLNLAFTFVEIFYGVW) threads the bilayer. The Lumenal portion of the chain corresponds to 436-444 (TNSLGLLSD). The chain crosses the membrane as a helical span at residues 445 to 465 (GFHMLFDCSALVMGLIAALMT). 2 residues coordinate Zn(2+): H447 and D451. The Cytoplasmic segment spans residues 466–484 (RWKATRIFSYGYGRVEILS). The chain crosses the membrane as a helical span at residues 485–505 (GFINGLFLVVIAFFVFIEAVA). Over 506–516 (RIYDPPDINTD) the chain is Lumenal. A helical transmembrane segment spans residues 517–537 (MLTPVSVGGLIVNLVGICAFS). Residues 538–586 (HAHSHGAARGGCPSHDHGHSHHGHGHSHGHNHGHSHSDHGHNHGHTHNH) form a his-rich loop; required for zinc transport region. The Cytoplasmic portion of the chain corresponds to 538–604 (HAHSHGAARG…VGMNANMRGV (67 aa)). Residues 547–593 (GGCPSHDHGHSHHGHGHSHGHNHGHSHSDHGHNHGHTHNHGHSHGSA) are disordered. 2 stretches are compositionally biased toward basic residues: residues 555-571 (GHSHHGHGHSHGHNHGH) and 579-589 (NHGHTHNHGHS). A helical membrane pass occupies residues 605 to 625 (FSHVLADTLGSVGVIVSTILI). The Zn(2+) site is built by H607 and D611. Residues 626 to 629 (RQFG) lie on the Lumenal side of the membrane. Residues 630–650 (WLIADPLCSLFIAVLIFGSVL) form a helical membrane-spanning segment. Residues 651–777 (PLLKDACQVI…KYYKDGTYIM (127 aa)) lie on the Cytoplasmic side of the membrane.

This sequence belongs to the cation diffusion facilitator (CDF) transporter (TC 2.A.4) family. SLC30A subfamily. In terms of assembly, heterodimer with SLC30A6/ZNT6; form a functional zinc ion transmembrane transporter.

Its subcellular location is the golgi apparatus. The protein localises to the golgi stack membrane. The protein resides in the cytoplasmic vesicle. It localises to the COPII-coated vesicle membrane. It is found in the secretory vesicle membrane. Its subcellular location is the trans-Golgi network membrane. The enzyme catalyses Zn(2+)(in) + 2 H(+)(out) = Zn(2+)(out) + 2 H(+)(in). Functionally, together with SLC30A6 forms a functional proton-coupled zinc ion antiporter mediating zinc entry into the lumen of organelles along the secretory pathway. By contributing to zinc ion homeostasis within the early secretory pathway, regulates the activation and folding of enzymes like alkaline phosphatases and enzymes involved in phosphatidylinositol glycan anchor biosynthesis. The polypeptide is Proton-coupled zinc antiporter SLC30A5 (slc30a5) (Xenopus tropicalis (Western clawed frog)).